A 146-amino-acid chain; its full sequence is MKKVQLITDGACLGNPGPGGWSAILRFEEQKKELWGCEKQTTNNRMELTAAIEGLRALREKCQVEVVTDSEYVLKGITTWIDGWKRKGWMTAAKKPVINQDLWKLLDEQVNRHQATWTWTKGHASHADNNRCDELATRAAREQSKS.

Positions 1-141 constitute an RNase H type-1 domain; sequence MKKVQLITDG…CDELATRAAR (141 aa). 4 residues coordinate Mg(2+): aspartate 9, glutamate 47, aspartate 69, and aspartate 133.

The protein belongs to the RNase H family. Monomer. The cofactor is Mg(2+).

It localises to the cytoplasm. It carries out the reaction Endonucleolytic cleavage to 5'-phosphomonoester.. Its function is as follows. Endonuclease that specifically degrades the RNA of RNA-DNA hybrids. The protein is Ribonuclease H of Solibacter usitatus (strain Ellin6076).